A 149-amino-acid polypeptide reads, in one-letter code: Large ribosomal subunit protein bL9 (149 aa).

This sequence belongs to the bacterial ribosomal protein bL9 family.

Its function is as follows. Binds to the 23S rRNA. This is Large ribosomal subunit protein bL9 from Leptospira interrogans serogroup Icterohaemorrhagiae serovar copenhageni (strain Fiocruz L1-130).